Consider the following 627-residue polypeptide: Neuronal acetylcholine receptor subunit alpha-4 (627 aa).

Residues 1–28 (MELGGPGAPRLLPPLLLLLGTGLLRASS) form the signal peptide. Over 29-242 (HVETRAHAEE…ITYAFVIRRL (214 aa)) the chain is Extracellular. N57 carries N-linked (GlcNAc...) asparagine glycosylation. Ca(2+)-binding residues include V76 and E78. Residues N107 and N174 are each glycosylated (N-linked (GlcNAc...) asparagine). Disulfide bonds link C161–C175 and C225–C226. Residues 243–267 (PLFYTINLIIPCLLISCLTVLVFYL) traverse the membrane as a helical segment. Residue C271 is the site of S-palmitoyl cysteine attachment. Transmembrane regions (helical) follow at residues 275 to 293 (ITLC…LLIT) and 309 to 330 (YLLF…VLNV). Residues 331 to 600 (HHRSPRTHTM…WKYVAMVIDR (270 aa)) are Cytoplasmic-facing. Disordered stretches follow at residues 382–479 (PRFW…EAVE) and 497–559 (DATS…RHLP). Residues S424, S538, and S541 each carry the phosphoserine modification. A helical transmembrane segment spans residues 601–619 (IFLWMFIIVCLLGTVGLFL).

This sequence belongs to the ligand-gated ion channel (TC 1.A.9) family. Acetylcholine receptor (TC 1.A.9.1) subfamily. Alpha-4/CHRNA4 sub-subfamily. Neuronal AChR is composed of two different types of subunits: alpha and beta. CHRNA4 forms heteropentameric neuronal acetylcholine receptors with CHRNB2 and CHRNB4, as well as CHRNA5 and CHRNB3 as accesory subunits. Found in two major stoichiometric forms, LS (low agonist sensitivity): (CHRNA4)3:(CHRNB2)2 and HS (high agonist sensitivity): (CHRNA4)2:(CHRNB2)3, the two stoichiometric forms differ in their unitary conductance, calcium permeability, ACh sensitivity and potentiation by divalent cation. Cells produce predominantly an (CHRNA4)3:(CHRNB2)2 nAChR. The (CHRNA4)2:(CHRNB2)3 expression is selectively up-regulated by nicotine and has lower single channel conductance and calcium permeability. In the striatum, also forms CHRNA4:CHRNA6:CHRNB2 complexes. Also found in the stoichiometric form: (CHRNA4:CHRNB2)2:CHRNB3. Interacts with RIC3; which is required for proper folding and assembly. Interacts with LYPD6.

Its subcellular location is the synaptic cell membrane. It localises to the cell membrane. The catalysed reaction is Ca(2+)(in) = Ca(2+)(out). It catalyses the reaction K(+)(in) = K(+)(out). It carries out the reaction Na(+)(in) = Na(+)(out). Activated by a myriad of ligands such as acetylcholine, cytisine, nicotine, choline and epibatidine. Channel potentiation by calcium is stoichiometry-selective, CHRNA4:CHRNB2 nACh receptor is achieved by calcium association with topographically distinct sites framed by anionic residues within the CHRNA4 subunit and between the CHRNA4 and CHRNB2 subunits. nAChR activity is inhibited by the antagonist alpha-conotoxins BuIA, PnIA, GID and MII, small disulfide-constrained peptides from cone snails. Its function is as follows. Component of neuronal acetylcholine receptors (nAChRs) that function as pentameric, ligand-gated cation channels with high calcium permeability among other activities. nAChRs are excitatory neurotrasnmitter receptors formed by a collection of nAChR subunits known to mediate synaptic transmission in the nervous system and the neuromuscular junction. Each nAchR subunit confers differential attributes to channel properties, including activation, deactivation and desensitization kinetics, pH sensitivity, cation permeability, and binding to allosteric modulators. CHRNA4 forms heteropentameric neuronal acetylcholine receptors with CHRNB2 and CHRNB4, as well as CHRNA5 and CHRNB3 as accesory subunits. Is the most abundant nAChR subtype expressed in the central nervous system. Found in two major stoichiometric forms,(CHRNA4)3:(CHRNB2)2 and (CHRNA4)2:(CHRNB2)3, the two stoichiometric forms differ in their unitary conductance, calcium permeability, ACh sensitivity and potentiation by divalent cation. Involved in the modulation of calcium-dependent signaling pathways, influences the release of neurotransmitters, including dopamine, glutamate and GABA. The polypeptide is Neuronal acetylcholine receptor subunit alpha-4 (CHRNA4) (Pan troglodytes (Chimpanzee)).